The sequence spans 65 residues: Alpha-conotoxine-like Am1.5 (65 aa).

An N-terminal signal peptide occupies residues 1–21 (MGMRMMFTVFLLVVLATTVVS). Residues 22–46 (FMSGRAFRDRNAAAKVSDLIALKAR) constitute a propeptide that is removed on maturation. Glutamate 49 carries the post-translational modification 4-carboxyglutamate. Positions 52–54 (SHP) are ser-Xaa-Pro motif, crucial for potent interaction with nAChR. A 4-hydroxyproline mark is found at proline 54 and proline 61. 4-carboxyglutamate is present on glutamate 62.

Belongs to the conotoxin A superfamily. Post-translationally, contains 2 disulfide bonds. As to expression, expressed by the venom duct.

Its subcellular location is the secreted. In terms of biological role, alpha-conotoxins act on postsynaptic membranes, they bind to the nicotinic acetylcholine receptors (nAChR) and thus inhibit them. The chain is Alpha-conotoxine-like Am1.5 from Conus amadis (Amadis cone).